The sequence spans 473 residues: Bifunctional protein HldE (473 aa).

Residues 1–317 form a ribokinase region; the sequence is MKLSMPRFDQ…RRAIQREEGS (317 aa). 194–197 lines the ATP pocket; that stretch reads NLSE. Asp263 is a catalytic residue. The tract at residues 343-473 is cytidylyltransferase; sequence FTNGCFDILH…TAIVEKIRKN (131 aa).

The protein in the N-terminal section; belongs to the carbohydrate kinase PfkB family. In the C-terminal section; belongs to the cytidylyltransferase family. In terms of assembly, homodimer.

It carries out the reaction D-glycero-beta-D-manno-heptose 7-phosphate + ATP = D-glycero-beta-D-manno-heptose 1,7-bisphosphate + ADP + H(+). The enzyme catalyses D-glycero-beta-D-manno-heptose 1-phosphate + ATP + H(+) = ADP-D-glycero-beta-D-manno-heptose + diphosphate. Its pathway is nucleotide-sugar biosynthesis; ADP-L-glycero-beta-D-manno-heptose biosynthesis; ADP-L-glycero-beta-D-manno-heptose from D-glycero-beta-D-manno-heptose 7-phosphate: step 1/4. The protein operates within nucleotide-sugar biosynthesis; ADP-L-glycero-beta-D-manno-heptose biosynthesis; ADP-L-glycero-beta-D-manno-heptose from D-glycero-beta-D-manno-heptose 7-phosphate: step 3/4. Functionally, catalyzes the phosphorylation of D-glycero-D-manno-heptose 7-phosphate at the C-1 position to selectively form D-glycero-beta-D-manno-heptose-1,7-bisphosphate. In terms of biological role, catalyzes the ADP transfer from ATP to D-glycero-beta-D-manno-heptose 1-phosphate, yielding ADP-D-glycero-beta-D-manno-heptose. The protein is Bifunctional protein HldE of Pseudomonas putida (strain W619).